A 525-amino-acid chain; its full sequence is G-protein regulator 2 (525 aa).

The GoLoco domain maps to 424-445 (PVDMMDLIFSMSSRMDDQRTEL). Residues 489–525 (TMNRILKRSKKSKSSLDSTNSIQGDDTRSDDVTMTSK) form a disordered region.

Interacts with gpr-1; gpr-1 forms a complex with lin-5 and GDP-bound goa-1.

It localises to the cytoplasm. Its subcellular location is the cell cortex. The protein localises to the cytoskeleton. The protein resides in the spindle. In the 1-cell embryo, probably together with gpr-1, controls nuclear rotation and spindle elongation during mitosis. Complex of gpr-1 and gpr-2, in association with lin-5, activates G-protein signaling to affect mitotic spindle force. Polarity determinants (par genes) may regulate lin-5/gpr-1/gpr-2/goa-1 locally to create the asymmetric forces that drive spindle movement. The protein is G-protein regulator 2 (gpr-2) of Caenorhabditis elegans.